Here is a 382-residue protein sequence, read N- to C-terminus: V-set and immunoglobulin domain-containing protein 1 (382 aa).

An N-terminal signal peptide occupies residues 1–21 (MGLTFWKVFLILNCLAGQVNG). Residues 22–133 (VQVTIPDSFV…FFGKNQGTIS (112 aa)) form the Ig-like V-type domain. Topologically, residues 22–234 (VQVTIPDSFV…DLTTPYPGIG (213 aa)) are extracellular. Asparagine 32 is a glycosylation site (N-linked (GlcNAc...) asparagine). 2 disulfide bridges follow: cysteine 43–cysteine 116 and cysteine 161–cysteine 211. In terms of domain architecture, Ig-like C2-type spans 140 to 227 (PSKPFCSIQG…GNSSCEIDLT (88 aa)). N-linked (GlcNAc...) asparagine glycosylation is found at asparagine 200 and asparagine 219. Residues 235–255 (IIVGAFVGTLIGVIIIISVVW) form a helical membrane-spanning segment. The Cytoplasmic portion of the chain corresponds to 256–382 (FVRRKVKAKG…FCDEEKVIKP (127 aa)). The disordered stretch occupies residues 266 to 382 (KERKRNSKTT…FCDEEKVIKP (117 aa)). The span at 273-285 (KTTTELEPMTKIN) shows a compositional bias: polar residues. Residues 286–298 (QRTEGETMPREDA) are compositionally biased toward basic and acidic residues. The segment covering 327–341 (EPEPALQPTVEPPSG) has biased composition (pro residues).

The protein localises to the membrane. The chain is V-set and immunoglobulin domain-containing protein 1 (VSIG1) from Bos taurus (Bovine).